We begin with the raw amino-acid sequence, 360 residues long: Mannonate dehydratase (360 aa).

It belongs to the mannonate dehydratase family. The cofactor is Fe(2+). Requires Mn(2+) as cofactor.

It carries out the reaction D-mannonate = 2-dehydro-3-deoxy-D-gluconate + H2O. It participates in carbohydrate metabolism; pentose and glucuronate interconversion. Functionally, catalyzes the dehydration of D-mannonate. The polypeptide is Mannonate dehydratase (uxuA) (Thermotoga maritima (strain ATCC 43589 / DSM 3109 / JCM 10099 / NBRC 100826 / MSB8)).